Consider the following 151-residue polypeptide: MLRVSVRSLVRKASSKAGSKAAVPAAAAAASAPLSPATSAASARAVPPVGESRVSIPPIPGVAAPRSHRAAAAPAKKAAAPKAAKAKTPAKASRKIKKAASKPSAPKQAAGKMRKAAGKAQRKIKAAARKAAPKKMAKSFGKKGAAKKAHK.

Positions 1–9 (MLRVSVRSL) are excised as a propeptide. A disordered region spans residues 13–151 (ASSKAGSKAA…KKGAAKKAHK (139 aa)). 3 stretches are compositionally biased toward low complexity: residues 15-49 (SKAGSKAAVPAAAAAASAPLSPATSAASARAVPPV), 70-91 (AAAAPAKKAAAPKAAKAKTPAK), and 101-111 (SKPSAPKQAAG). Residues 112–151 (KMRKAAGKAQRKIKAAARKAAPKKMAKSFGKKGAAKKAHK) show a composition bias toward basic residues.

Belongs to the KAP family. In terms of assembly, associates with the kinetoplast DNA network.

The protein resides in the mitochondrion matrix. It localises to the kinetoplast. Its function is as follows. Histone H1-like DNA-binding protein involved in the organization and segregation of kinetoplast DNA (kDNA). The mitochondrial DNA of kinetoplastid protozoa consists of about 5,000 minicircles and 20 to 30 maxicircles. These circular DNAs are held together by catenation into a highly organized compact disk structure referred to as a kinetoplast DNA (kDNA) network. Binds preferentially to a specific fragment of minicircle DNA and is able to compact kDNA networks through DNA charge neutralization and condensation. The chain is Kinetoplast-associated protein 1 (KAP4) from Crithidia fasciculata.